Here is a 338-residue protein sequence, read N- to C-terminus: Tagatose 1,6-diphosphate aldolase (338 aa).

It belongs to the aldolase LacD family.

The catalysed reaction is D-tagatofuranose 1,6-bisphosphate = D-glyceraldehyde 3-phosphate + dihydroxyacetone phosphate. It functions in the pathway carbohydrate metabolism; D-tagatose 6-phosphate degradation; D-glyceraldehyde 3-phosphate and glycerone phosphate from D-tagatose 6-phosphate: step 2/2. This Listeria monocytogenes serotype 4a (strain HCC23) protein is Tagatose 1,6-diphosphate aldolase.